The chain runs to 62 residues: uncharacterized protein (62 aa).

The next 2 helical transmembrane spans lie at 9–29 (HNEL…ALIG) and 42–62 (AAVV…LQLL).

Its subcellular location is the membrane. This is an uncharacterized protein from Saccharomyces cerevisiae (strain ATCC 204508 / S288c) (Baker's yeast).